A 389-amino-acid chain; its full sequence is viridiflorene synthase Agr2 (389 aa).

Residues 1–15 (MVWDFVLSLFHSLLA) form the signal peptide. Mg(2+) is bound by residues Asp-128, Asn-263, Ser-267, and Glu-271. The DDXXD motif signature appears at 128-132 (DEVTD). Residues Arg-360 and Tyr-361 each coordinate (2E,6E)-farnesyl diphosphate.

Belongs to the terpene synthase family. The cofactor is Mg(2+).

The catalysed reaction is (2E,6E)-farnesyl diphosphate = viridiflorene + diphosphate. Terpene cyclase that catalyzes the cyclization of farnesyl diphosphate (FPP) to viridiflorene. The sequence is that of viridiflorene synthase Agr2 from Cyclocybe aegerita (Black poplar mushroom).